Reading from the N-terminus, the 351-residue chain is tRNA-specific 2-thiouridylase MnmA (351 aa).

Residue 6–13 (ALSGGTDS) coordinates ATP. The active-site Nucleophile is Cys-96. An intrachain disulfide couples Cys-96 to Cys-193. Gly-120 serves as a coordination point for ATP. The interaction with tRNA stretch occupies residues 143-145 (KDQ). Cys-193 acts as the Cysteine persulfide intermediate in catalysis. Residues 298–299 (RY) form an interaction with tRNA region.

It belongs to the MnmA/TRMU family.

It localises to the cytoplasm. It catalyses the reaction S-sulfanyl-L-cysteinyl-[protein] + uridine(34) in tRNA + AH2 + ATP = 2-thiouridine(34) in tRNA + L-cysteinyl-[protein] + A + AMP + diphosphate + H(+). Catalyzes the 2-thiolation of uridine at the wobble position (U34) of tRNA, leading to the formation of s(2)U34. In Nitratidesulfovibrio vulgaris (strain DSM 19637 / Miyazaki F) (Desulfovibrio vulgaris), this protein is tRNA-specific 2-thiouridylase MnmA.